Reading from the N-terminus, the 316-residue chain is Ribose-phosphate pyrophosphokinase (316 aa).

Residues 37-39 (DGE) and 96-97 (RQ) contribute to the ATP site. Positions 131 and 171 each coordinate Mg(2+). The active site involves lysine 195. D-ribose 5-phosphate is bound by residues arginine 197, aspartate 221, and 225-229 (DTGGT).

Belongs to the ribose-phosphate pyrophosphokinase family. Class I subfamily. In terms of assembly, homohexamer. The cofactor is Mg(2+).

It localises to the cytoplasm. It catalyses the reaction D-ribose 5-phosphate + ATP = 5-phospho-alpha-D-ribose 1-diphosphate + AMP + H(+). It functions in the pathway metabolic intermediate biosynthesis; 5-phospho-alpha-D-ribose 1-diphosphate biosynthesis; 5-phospho-alpha-D-ribose 1-diphosphate from D-ribose 5-phosphate (route I): step 1/1. In terms of biological role, involved in the biosynthesis of the central metabolite phospho-alpha-D-ribosyl-1-pyrophosphate (PRPP) via the transfer of pyrophosphoryl group from ATP to 1-hydroxyl of ribose-5-phosphate (Rib-5-P). The chain is Ribose-phosphate pyrophosphokinase from Haemophilus ducreyi (strain 35000HP / ATCC 700724).